Consider the following 607-residue polypeptide: MAASVANCCFSVLNASVKIQSSSISSPWCFVSASSLTPRASSNIKRKSSRSDSPSPILNPEKNYPGRVRDESSNPPQKMAFKAFGSPKKEKKESLSDFSRDQQTDPAKIHDASFLNAVVKVYCTHTAPDYSLPWQKQRQFTSTGSAFMIGDGKLLTNAHCVEHDTQVKVKRRGDDRKYVAKVLVRGVDCDIALLSVESEDFWKGAEPLRLGHLPRLQDSVTVVGYPLGGDTISVTKGVVSRIEVTSYAHGSSDLLGIQIDAAINPGNSGGPAFNDQGECIGVAFQVYRSEETENIGYVIPTTVVSHFLTDYERNGKYTGYPCLGVLLQKLENPALRECLKVPTNEGVLVRRVEPTSDASKVLKEGDVIVSFDDLHVGCEGTVPFRSSERIAFRYLISQKFAGDIAEIGIIRAGEHKKVQVVLRPRVHLVPYHIDGGQPSYIIVAGLVFTPLSEPLIEEECEDTIGLKLLTKARYSVARFRGEQIVILSQVLANEVNIGYEDMNNQQVLKFNGIPIRNIHHLAHLIDMCKDKYLVFEFEDNYVAVLEREASNSASLCILKDYGIPSERSADLLEPYVDPIDDTQALDQGIGDSPVSNLEIGFDGLVWA.

Residues 41-104 (SSNIKRKSSR…LSDFSRDQQT (64 aa)) form a disordered region. Residues 87–104 (PKKEKKESLSDFSRDQQT) show a composition bias toward basic and acidic residues. The interval 118-317 (VVKVYCTHTA…LTDYERNGKY (200 aa)) is serine protease. Active-site charge relay system residues include H159, D190, and S268. The 96-residue stretch at 308–403 (LTDYERNGKY…YLISQKFAGD (96 aa)) folds into the PDZ domain.

It belongs to the peptidase S1C family.

The protein resides in the plastid. It is found in the chloroplast thylakoid membrane. Functionally, serine protease that performs the primary cleavage of the photodamaged D1 protein in plant photosystem II. The chain is Protease Do-like 2, chloroplastic (DEGP2) from Arabidopsis thaliana (Mouse-ear cress).